The chain runs to 210 residues: Large ribosomal subunit protein uL4 (210 aa).

The protein belongs to the universal ribosomal protein uL4 family. Part of the 50S ribosomal subunit.

One of the primary rRNA binding proteins, this protein initially binds near the 5'-end of the 23S rRNA. It is important during the early stages of 50S assembly. It makes multiple contacts with different domains of the 23S rRNA in the assembled 50S subunit and ribosome. Functionally, forms part of the polypeptide exit tunnel. This Thermus thermophilus protein is Large ribosomal subunit protein uL4 (rplD).